The chain runs to 148 residues: Large ribosomal subunit protein bL9 (148 aa).

This sequence belongs to the bacterial ribosomal protein bL9 family.

Functionally, binds to the 23S rRNA. In Frankia alni (strain DSM 45986 / CECT 9034 / ACN14a), this protein is Large ribosomal subunit protein bL9.